The chain runs to 373 residues: Nuclear migration protein JNM1 (373 aa).

The segment at 33 to 53 (EVKEDGQQEEQEEASSRKDGL) is disordered. Ser91 is modified (phosphoserine). 3 coiled-coil regions span residues 114–139 (KIEN…LATE), 200–245 (EDRK…EFEN), and 331–367 (WLKA…EDEA).

Component of the dynactin complex composed of at least ARP1, JNM1, NIP100 and ARP10. Dynactin comprises a short rod of ARP1 polymers attached to ARP10 at its pointed-end and probably associated with the capping protein at its barbed-end. The rod structure is implicated in dynein cargo binding. A sidearm formed by NIP100 projects from the ARP1 filament and is implicated in motor binding. Interacts with ARP1.

It is found in the cytoplasm. It localises to the cytoskeleton. In terms of biological role, component of the dynactin complex which assists cytoplasmic dynein by increasing its processivity and by regulation of its cargo binding. The dynactin complex is required for the spindle translocation late in anaphase and is involved in a cell wall synthesis checkpoint. JNM1 is associated with the rod and links it to the projecting sidearm. Required for proper nuclear migration during the mitotic cell cycle and for astral microtubule development. The protein is Nuclear migration protein JNM1 (JNM1) of Saccharomyces cerevisiae (strain ATCC 204508 / S288c) (Baker's yeast).